An 830-amino-acid chain; its full sequence is Probable glucan 1,3-beta-glucosidase D (830 aa).

Basic and acidic residues-rich tracts occupy residues 1–11 and 74–84; these read MPGHSRSRDRL and VHEHDHDHEYD. Disordered regions lie at residues 1–91, 127–163, and 260–297; these read MPGH…EEPW, MSGALGDDGPPPLPSDALGRGKGKKRLDRETRRQRRK, and GGPGMEMRHRGGGGPPAEGLLQKEGDWDGSTKGSSTSA. Residues 1-307 lie on the Cytoplasmic side of the membrane; the sequence is MPGHSRSRDR…RPSFWKRYHK (307 aa). Basic residues predominate over residues 147 to 163; sequence GKGKKRLDRETRRQRRK. A helical; Signal-anchor for type II membrane protein membrane pass occupies residues 308–328; the sequence is TFIFFAILIVLAAIAIPVGII. Topologically, residues 329-830 are extracellular; that stretch reads EARRLHGTSG…PSFGNLPEYY (502 aa). 7 N-linked (GlcNAc...) asparagine glycosylation sites follow: asparagine 341, asparagine 376, asparagine 381, asparagine 393, asparagine 397, asparagine 546, and asparagine 558. Glutamate 597 (proton donor) is an active-site residue. N-linked (GlcNAc...) asparagine glycans are attached at residues asparagine 610, asparagine 669, and asparagine 689. Glutamate 702 acts as the Nucleophile in catalysis.

Belongs to the glycosyl hydrolase 5 (cellulase A) family.

It localises to the cell membrane. The enzyme catalyses Successive hydrolysis of beta-D-glucose units from the non-reducing ends of (1-&gt;3)-beta-D-glucans, releasing alpha-glucose.. In terms of biological role, glucosidase involved in the degradation of cellulosic biomass. Active on lichenan. This Aspergillus niger (strain ATCC MYA-4892 / CBS 513.88 / FGSC A1513) protein is Probable glucan 1,3-beta-glucosidase D (exgD).